Consider the following 156-residue polypeptide: Transcription antitermination protein NusB (156 aa).

The protein belongs to the NusB family.

Involved in transcription antitermination. Required for transcription of ribosomal RNA (rRNA) genes. Binds specifically to the boxA antiterminator sequence of the ribosomal RNA (rrn) operons. The sequence is that of Transcription antitermination protein NusB from Syntrophotalea carbinolica (strain DSM 2380 / NBRC 103641 / GraBd1) (Pelobacter carbinolicus).